Here is a 76-residue protein sequence, read N- to C-terminus: MLILSRKVNEGIVIDDNIHIKVISIDRGSVRLGFEAPESTLILRTELKEAIVSENQKASASVDESLLENIKKVIKP.

The protein belongs to the CsrA/RsmA family. In terms of assembly, homodimer; the beta-strands of each monomer intercalate to form a hydrophobic core, while the alpha-helices form wings that extend away from the core.

Its subcellular location is the cytoplasm. A translational regulator that binds mRNA to regulate translation initiation and/or mRNA stability. Usually binds in the 5'-UTR at or near the Shine-Dalgarno sequence preventing ribosome-binding, thus repressing translation. Its main target seems to be the major flagellin gene, while its function is anatagonized by FliW. This is Translational regulator CsrA from Helicobacter pylori (strain J99 / ATCC 700824) (Campylobacter pylori J99).